The following is a 125-amino-acid chain: Calcitonin receptor-stimulating peptide 2 (125 aa).

The first 25 residues, 1 to 25, serve as a signal peptide directing secretion; that stretch reads MGFWKFLPFLVLSFLVVYQAGMFQA. A propeptide spanning residues 26–77 is cleaved from the precursor; sequence APFRSALENDFDPAILTEKEMCLLLAAVMNDYVQMKTSELKQEAEHFHITAQ. Cys-81 and Cys-86 are oxidised to a cystine.

This sequence belongs to the calcitonin family.

The protein resides in the secreted. This is Calcitonin receptor-stimulating peptide 2 (CRSP2) from Capra hircus (Goat).